The chain runs to 30 residues: V-type proton ATPase catalytic subunit A isoform 2 (30 aa).

This sequence belongs to the ATPase alpha/beta chains family. In terms of assembly, V-ATPase is a heteromultimeric enzyme composed of a peripheral catalytic V1 complex (main components: subunits A, B, C, D, E, and F) attached to an integral membrane V0 proton pore complex (main component: the proteolipid protein).

It carries out the reaction ATP + H2O + 4 H(+)(in) = ADP + phosphate + 5 H(+)(out). Its function is as follows. Catalytic subunit of the peripheral V1 complex of vacuolar ATPase. V-ATPase vacuolar ATPase is responsible for acidifying a variety of intracellular compartments in eukaryotic cells. The sequence is that of V-type proton ATPase catalytic subunit A isoform 2 from Equisetum arvense (Field horsetail).